The sequence spans 297 residues: Inosose dehydratase (297 aa).

The protein belongs to the IolE/MocC family. Glutathione is required as a cofactor. The cofactor is Co(2+). Mn(2+) serves as cofactor.

The enzyme catalyses scyllo-inosose = 3D-3,5/4-trihydroxycyclohexane-1,2-dione + H2O. The protein operates within polyol metabolism; myo-inositol degradation into acetyl-CoA; acetyl-CoA from myo-inositol: step 2/7. Functionally, catalyzes the dehydration of inosose (2-keto-myo-inositol, 2KMI or 2,4,6/3,5-pentahydroxycyclohexanone) to 3D-(3,5/4)-trihydroxycyclohexane-1,2-dione (D-2,3-diketo-4-deoxy-epi-inositol). The chain is Inosose dehydratase from Clostridium perfringens (strain ATCC 13124 / DSM 756 / JCM 1290 / NCIMB 6125 / NCTC 8237 / Type A).